The primary structure comprises 421 residues: Granaticin polyketide putative beta-ketoacyl synthase 1 (421 aa).

The Ketosynthase family 3 (KS3) domain occupies 2–416 (TRRVVITGVG…GFQSAMVLHR (415 aa)). Residues Cys-169, His-309, and His-346 each act as for beta-ketoacyl synthase activity in the active site.

Belongs to the thiolase-like superfamily. Beta-ketoacyl-ACP synthases family.

The protein operates within antibiotic biosynthesis; granaticin biosynthesis. In Streptomyces violaceoruber, this protein is Granaticin polyketide putative beta-ketoacyl synthase 1 (gra-orf1).